The primary structure comprises 263 residues: Acyl-[acyl-carrier-protein]--UDP-N-acetylglucosamine O-acyltransferase (263 aa).

This sequence belongs to the transferase hexapeptide repeat family. LpxA subfamily. Homotrimer.

Its subcellular location is the cytoplasm. It catalyses the reaction a (3R)-hydroxyacyl-[ACP] + UDP-N-acetyl-alpha-D-glucosamine = a UDP-3-O-[(3R)-3-hydroxyacyl]-N-acetyl-alpha-D-glucosamine + holo-[ACP]. Its pathway is glycolipid biosynthesis; lipid IV(A) biosynthesis; lipid IV(A) from (3R)-3-hydroxytetradecanoyl-[acyl-carrier-protein] and UDP-N-acetyl-alpha-D-glucosamine: step 1/6. In terms of biological role, involved in the biosynthesis of lipid A, a phosphorylated glycolipid that anchors the lipopolysaccharide to the outer membrane of the cell. The chain is Acyl-[acyl-carrier-protein]--UDP-N-acetylglucosamine O-acyltransferase from Campylobacter jejuni (strain RM1221).